We begin with the raw amino-acid sequence, 414 residues long: L-cysteine:1D-myo-inositol 2-amino-2-deoxy-alpha-D-glucopyranoside ligase (414 aa).

C44 is a Zn(2+) binding site. L-cysteinyl-5'-AMP contacts are provided by residues 44-47 (CGIT), T59, and 82-84 (NIT). Residues 46-56 (ITPYDSTHLGH) carry the 'HIGH' region motif. A 'ERGGDP' region motif is present at residues 188–193 (ERGGDP). W228 serves as a coordination point for L-cysteinyl-5'-AMP. C232 is a Zn(2+) binding site. L-cysteinyl-5'-AMP is bound at residue 250–252 (GSD). Position 257 (H257) interacts with Zn(2+). I284 provides a ligand contact to L-cysteinyl-5'-AMP. The 'KMSKS' region signature appears at 290–294 (KMSKS).

This sequence belongs to the class-I aminoacyl-tRNA synthetase family. MshC subfamily. As to quaternary structure, monomer. It depends on Zn(2+) as a cofactor.

The enzyme catalyses 1D-myo-inositol 2-amino-2-deoxy-alpha-D-glucopyranoside + L-cysteine + ATP = 1D-myo-inositol 2-(L-cysteinylamino)-2-deoxy-alpha-D-glucopyranoside + AMP + diphosphate + H(+). Functionally, catalyzes the ATP-dependent condensation of GlcN-Ins and L-cysteine to form L-Cys-GlcN-Ins. The chain is L-cysteine:1D-myo-inositol 2-amino-2-deoxy-alpha-D-glucopyranoside ligase (mshC) from Corynebacterium diphtheriae (strain ATCC 700971 / NCTC 13129 / Biotype gravis).